We begin with the raw amino-acid sequence, 464 residues long: MAAAFSSTVGAPASTPTNFLGKKLKKQVTSAVNYHGKSSKANRFTVMAAENIDEKRNTDKWKGLAYDISDDQQDITRGKGIVDSLFQAPTGHGTHEAVLSSYEYVSQGLRKYDFDNTMGGFYIAPAFMDKLVVHLSKNFMTLPNIKIPLILGIWGGKGQGKSFQCELVFAKMGINPIMMSAGELESGNAGEPAKLIRQRYREAADMIKKGKMCCLFINDLDAGAGRMGGTTQYTVNNQMVNATLMNIADAPTNVQLPGMYNKRENPRVPIVVTGNDFSTLYAPLIRDGRMEKFYWAPTRDDRIGVCKGIFQTDNVSDESVVKIVDTFPGQSIDFFGALRARVYDDEVRKWVGSTGIENIGKRLVNSRDGPVTFEQPKMTVEKLLEYGHMLVQEQDNVKRVQLADTYMSQAALGDANQDAMKTGSFYGKGAQQGTLPVPEGCTDQNAKNYDPTARSDDGSCLYTF.

The N-terminal 48 residues, 1-48 (MAAAFSSTVGAPASTPTNFLGKKLKKQVTSAVNYHGKSSKANRFTVMA), are a transit peptide targeting the chloroplast. 155–162 (GGKGQGKS) lines the ATP pocket.

The protein belongs to the RuBisCO activase family.

The protein resides in the plastid. Its subcellular location is the chloroplast stroma. Activation of RuBisCO (ribulose-1,5-bisphosphate carboxylase/oxygenase; EC 4.1.1.39) involves the ATP-dependent carboxylation of the epsilon-amino group of lysine leading to a carbamate structure. The sequence is that of Ribulose bisphosphate carboxylase/oxygenase activase A, chloroplastic (RCAA) from Hordeum vulgare (Barley).